The chain runs to 845 residues: Protein TSD2 (845 aa).

The interval 193–283 (DVDSDSESDS…SASATRLTNA (91 aa)) is disordered. 2 stretches are compositionally biased toward basic and acidic residues: residues 202–212 (SDSHSDSHSDS) and 230–242 (ARSHDERQRDGSG). The span at 243–272 (GKRKRGSHSPLSRRRQRHKQGQRHKPRHRS) shows a compositional bias: basic residues.

Belongs to the CDC45 family.

Its subcellular location is the nucleus. Functionally, temperature-sensitive protein required for DNA synthesis. May be a transcription factor that regulates the level or influences the stability of DNA polymerases or auxiliary proteins. The protein is Protein TSD2 (TSD2) of Mycosarcoma maydis (Corn smut fungus).